Reading from the N-terminus, the 429-residue chain is Enolase (429 aa).

Residue Q164 coordinates (2R)-2-phosphoglycerate. The Proton donor role is filled by E206. Positions 243, 286, and 313 each coordinate Mg(2+). The (2R)-2-phosphoglycerate site is built by K338, R367, S368, and K389. Residue K338 is the Proton acceptor of the active site.

It belongs to the enolase family. The cofactor is Mg(2+).

Its subcellular location is the cytoplasm. It is found in the secreted. The protein localises to the cell surface. The catalysed reaction is (2R)-2-phosphoglycerate = phosphoenolpyruvate + H2O. Its pathway is carbohydrate degradation; glycolysis; pyruvate from D-glyceraldehyde 3-phosphate: step 4/5. Its function is as follows. Catalyzes the reversible conversion of 2-phosphoglycerate (2-PG) into phosphoenolpyruvate (PEP). It is essential for the degradation of carbohydrates via glycolysis. The protein is Enolase of Thermotoga sp. (strain RQ2).